Here is a 275-residue protein sequence, read N- to C-terminus: Nitrogenase iron protein 2 (275 aa).

An ATP-binding site is contributed by G9 to S16. C97 provides a ligand contact to [4Fe-4S] cluster. Position 100 is an ADP-ribosylarginine; by dinitrogenase reductase ADP-ribosyltransferase (R100). [4Fe-4S] cluster is bound at residue C132.

Belongs to the NifH/BchL/ChlL family. Homodimer. The cofactor is [4Fe-4S] cluster. The reversible ADP-ribosylation of Arg-100 inactivates the nitrogenase reductase and regulates nitrogenase activity.

The enzyme catalyses N2 + 8 reduced [2Fe-2S]-[ferredoxin] + 16 ATP + 16 H2O = H2 + 8 oxidized [2Fe-2S]-[ferredoxin] + 2 NH4(+) + 16 ADP + 16 phosphate + 6 H(+). The key enzymatic reactions in nitrogen fixation are catalyzed by the nitrogenase complex, which has 2 components: the iron protein (component 2) and a component 1 which is either a molybdenum-iron protein, a vanadium-iron, or an iron-iron protein. This chain is Nitrogenase iron protein 2 (anfH), found in Rhodobacter capsulatus (Rhodopseudomonas capsulata).